Consider the following 137-residue polypeptide: NADH-quinone oxidoreductase subunit A 1 (137 aa).

The next 3 helical transmembrane spans lie at 14–34, 66–86, and 95–115; these read FAAFLLGVVGLLAFMLGVSAL, FYLVAMLFVIFDVEALFLFAW, and WAGLIEATIFIAILLAGLVYL.

It belongs to the complex I subunit 3 family. NDH-1 is composed of 13 different subunits. Subunits NuoA, H, J, K, L, M, N constitute the membrane sector of the complex.

The protein localises to the cell inner membrane. The catalysed reaction is a quinone + NADH + 5 H(+)(in) = a quinol + NAD(+) + 4 H(+)(out). In terms of biological role, NDH-1 shuttles electrons from NADH, via FMN and iron-sulfur (Fe-S) centers, to quinones in the respiratory chain. The immediate electron acceptor for the enzyme in this species is believed to be ubiquinone. Couples the redox reaction to proton translocation (for every two electrons transferred, four hydrogen ions are translocated across the cytoplasmic membrane), and thus conserves the redox energy in a proton gradient. The sequence is that of NADH-quinone oxidoreductase subunit A 1 from Pseudomonas paraeruginosa (strain DSM 24068 / PA7) (Pseudomonas aeruginosa (strain PA7)).